Consider the following 114-residue polypeptide: T cell receptor alpha variable 10 (114 aa).

The first 21 residues, methionine 1–glycine 21, serve as a signal peptide directing secretion. The Ig-like domain maps to asparagine 23–serine 114. 2 N-linked (GlcNAc...) asparagine glycosylation sites follow: asparagine 39 and asparagine 45. A disulfide bond links cysteine 44 and cysteine 111.

As to quaternary structure, alpha-beta TR is a heterodimer composed of an alpha and beta chain; disulfide-linked. The alpha-beta TR is associated with the transmembrane signaling CD3 coreceptor proteins to form the TR-CD3 (TcR or TCR). The assembly of alpha-beta TR heterodimers with CD3 occurs in the endoplasmic reticulum where a single alpha-beta TR heterodimer associates with one CD3D-CD3E heterodimer, one CD3G-CD3E heterodimer and one CD247 homodimer forming a stable octameric structure. CD3D-CD3E and CD3G-CD3E heterodimers preferentially associate with TR alpha and TR beta chains, respectively. The association of the CD247 homodimer is the last step of TcR assembly in the endoplasmic reticulum and is required for transport to the cell surface.

Its subcellular location is the cell membrane. V region of the variable domain of T cell receptor (TR) alpha chain that participates in the antigen recognition. Alpha-beta T cell receptors are antigen specific receptors which are essential to the immune response and are present on the cell surface of T lymphocytes. Recognize peptide-major histocompatibility (MH) (pMH) complexes that are displayed by antigen presenting cells (APC), a prerequisite for efficient T cell adaptive immunity against pathogens. Binding of alpha-beta TR to pMH complex initiates TR-CD3 clustering on the cell surface and intracellular activation of LCK that phosphorylates the ITAM motifs of CD3G, CD3D, CD3E and CD247 enabling the recruitment of ZAP70. In turn ZAP70 phosphorylates LAT, which recruits numerous signaling molecules to form the LAT signalosome. The LAT signalosome propagates signal branching to three major signaling pathways, the calcium, the mitogen-activated protein kinase (MAPK) kinase and the nuclear factor NF-kappa-B (NF-kB) pathways, leading to the mobilization of transcription factors that are critical for gene expression and essential for T cell growth and differentiation. The T cell repertoire is generated in the thymus, by V-(D)-J rearrangement. This repertoire is then shaped by intrathymic selection events to generate a peripheral T cell pool of self-MH restricted, non-autoaggressive T cells. Post-thymic interaction of alpha-beta TR with the pMH complexes shapes TR structural and functional avidity. The chain is T cell receptor alpha variable 10 from Homo sapiens (Human).